The following is a 235-amino-acid chain: Pyridoxine 5'-phosphate synthase (235 aa).

Asn7 serves as a coordination point for 3-amino-2-oxopropyl phosphate. 9 to 10 (DH) is a binding site for 1-deoxy-D-xylulose 5-phosphate. Arg18 is a 3-amino-2-oxopropyl phosphate binding site. His43 acts as the Proton acceptor in catalysis. 1-deoxy-D-xylulose 5-phosphate is bound by residues Arg45 and His50. Glu70 functions as the Proton acceptor in the catalytic mechanism. Thr100 is a 1-deoxy-D-xylulose 5-phosphate binding site. His187 functions as the Proton donor in the catalytic mechanism. 3-amino-2-oxopropyl phosphate contacts are provided by residues Gly188 and 209–210 (GH).

Belongs to the PNP synthase family. In terms of assembly, homooctamer; tetramer of dimers.

Its subcellular location is the cytoplasm. It carries out the reaction 3-amino-2-oxopropyl phosphate + 1-deoxy-D-xylulose 5-phosphate = pyridoxine 5'-phosphate + phosphate + 2 H2O + H(+). It participates in cofactor biosynthesis; pyridoxine 5'-phosphate biosynthesis; pyridoxine 5'-phosphate from D-erythrose 4-phosphate: step 5/5. In terms of biological role, catalyzes the complicated ring closure reaction between the two acyclic compounds 1-deoxy-D-xylulose-5-phosphate (DXP) and 3-amino-2-oxopropyl phosphate (1-amino-acetone-3-phosphate or AAP) to form pyridoxine 5'-phosphate (PNP) and inorganic phosphate. This Desulfatibacillum aliphaticivorans protein is Pyridoxine 5'-phosphate synthase.